We begin with the raw amino-acid sequence, 1319 residues long: DNA (cytosine-5)-methyltransferase CMT2 (1319 aa).

The span at 1–15 shows a compositional bias: pro residues; it reads METPPPDPVSPPPPA. Disordered regions lie at residues 1–34, 142–189, 265–302, and 442–468; these read METP…GGFS, ALDS…VASS, SAAS…KLPA, and KSRV…RART. Residues 266-279 show a composition bias toward polar residues; that stretch reads AASSMPLNQNGDSS. Positions 285–296 are enriched in basic and acidic residues; sequence RVADSRKSRSSE. The BAH domain occupies 602–719; sequence YTFCIGECAF…IDYSTFSTIE (118 aa). In terms of domain architecture, SAM-dependent MTase C5-type spans 758–1296; the sequence is LSLLDLYCGC…YALAMAYLKK (539 aa). Positions 863–928 constitute a Chromo domain; that stretch reads FEVWKLVDIC…EGHRQRILPR (66 aa). Residue C941 is part of the active site.

It localises to the nucleus. The enzyme catalyses a 2'-deoxycytidine in DNA + S-adenosyl-L-methionine = a 5-methyl-2'-deoxycytidine in DNA + S-adenosyl-L-homocysteine + H(+). Involved in CpXpG DNA methylation. The polypeptide is DNA (cytosine-5)-methyltransferase CMT2 (Oryza sativa subsp. japonica (Rice)).